A 422-amino-acid polypeptide reads, in one-letter code: 5'-deoxyadenosine deaminase (422 aa).

Zn(2+) contacts are provided by His-57 and His-59. Substrate contacts are provided by Glu-86 and His-178. His-205 provides a ligand contact to Zn(2+). Glu-208 and Asp-294 together coordinate substrate. A Zn(2+)-binding site is contributed by Asp-294.

Belongs to the metallo-dependent hydrolases superfamily. MTA/SAH deaminase family. As to quaternary structure, homotetramer. Zn(2+) is required as a cofactor.

It catalyses the reaction 5'-deoxyadenosine + H2O + H(+) = 5'-deoxyinosine + NH4(+). The enzyme catalyses S-adenosyl-L-homocysteine + H2O + H(+) = S-inosyl-L-homocysteine + NH4(+). It carries out the reaction S-methyl-5'-thioadenosine + H2O + H(+) = S-methyl-5'-thioinosine + NH4(+). The catalysed reaction is adenosine + H2O + H(+) = inosine + NH4(+). It functions in the pathway amino-acid biosynthesis; S-adenosyl-L-methionine biosynthesis. Catalyzes the deamination of three SAM-derived enzymatic products, namely 5'-deoxyadenosine, S-adenosyl-L-homocysteine, and 5'-methylthioadenosine, to produce the inosine analogs. Can also deaminate adenosine. The preferred substrate for this enzyme is 5'-deoxyadenosine, but all these substrates are efficiently deaminated. Likely functions in a S-adenosyl-L-methionine (SAM) recycling pathway from S-adenosyl-L-homocysteine (SAH) produced from SAM-dependent methylation reactions. May also be involved in the recycling of 5'-deoxyadenosine, whereupon the 5'-deoxyribose moiety of 5'-deoxyinosine is further metabolized to deoxyhexoses used for the biosynthesis of aromatic amino acids in methanogens. The chain is 5'-deoxyadenosine deaminase from Methanococcus maripaludis (strain C6 / ATCC BAA-1332).